The sequence spans 151 residues: MKKKKALPSLLYLVFIVLLPWGVSSSFNKCLELWIKNWWNTRQSETLLTDIQEKRILERFIELEELSLLDEMIKGKLKTHVQKPPTGIHKEIIQWVKINNEDHLHTILHFSTNIICLAILSGSFFLGKEELVILNSWVQEFFYNLNDSIKA.

Transmembrane regions (helical) follow at residues 7-27 (LPSLLYLVFIVLLPWGVSSSF) and 107-127 (ILHFSTNIICLAILSGSFFLG).

It belongs to the CemA family.

Its subcellular location is the plastid. It is found in the chloroplast inner membrane. It carries out the reaction K(+)(in) + H(+)(out) = K(+)(out) + H(+)(in). Contributes to K(+)/H(+) antiport activity by supporting proton efflux to control proton extrusion and homeostasis in chloroplasts in a light-dependent manner to modulate photosynthesis. Prevents excessive induction of non-photochemical quenching (NPQ) under continuous-light conditions. Indirectly promotes efficient inorganic carbon uptake into chloroplasts. The polypeptide is Potassium/proton antiporter CemA (Aegilops crassa (Persian goatgrass)).